The sequence spans 198 residues: Na(+)-translocating NADH-quinone reductase subunit E (198 aa).

6 helical membrane passes run 11 to 31 (AVFI…FLAV), 35 to 55 (VTTA…SVPA), 77 to 97 (FLNF…LEMI), 109 to 129 (LGIF…VSFM), 140 to 160 (IVYG…LASI), and 176 to 196 (LGIT…FSGV).

The protein belongs to the NqrDE/RnfAE family. As to quaternary structure, composed of six subunits; NqrA, NqrB, NqrC, NqrD, NqrE and NqrF.

It localises to the cell inner membrane. It catalyses the reaction a ubiquinone + n Na(+)(in) + NADH + H(+) = a ubiquinol + n Na(+)(out) + NAD(+). Its function is as follows. NQR complex catalyzes the reduction of ubiquinone-1 to ubiquinol by two successive reactions, coupled with the transport of Na(+) ions from the cytoplasm to the periplasm. NqrA to NqrE are probably involved in the second step, the conversion of ubisemiquinone to ubiquinol. This is Na(+)-translocating NADH-quinone reductase subunit E from Photorhabdus laumondii subsp. laumondii (strain DSM 15139 / CIP 105565 / TT01) (Photorhabdus luminescens subsp. laumondii).